Consider the following 394-residue polypeptide: Elongation factor Tu (394 aa).

Positions 10–204 (KPHVNVGTIG…ALDSYIPEPQ (195 aa)) constitute a tr-type G domain. A G1 region spans residues 19 to 26 (GHVDHGKT). 19–26 (GHVDHGKT) provides a ligand contact to GTP. Residue Thr26 participates in Mg(2+) binding. Residues 60-64 (GITIN) are G2. Residues 81 to 84 (DCPG) form a G3 region. GTP-binding positions include 81 to 85 (DCPGH) and 136 to 139 (NKCD). Positions 136-139 (NKCD) are G4. Residues 174–176 (SAL) are G5.

It belongs to the TRAFAC class translation factor GTPase superfamily. Classic translation factor GTPase family. EF-Tu/EF-1A subfamily. As to quaternary structure, monomer.

Its subcellular location is the cytoplasm. The enzyme catalyses GTP + H2O = GDP + phosphate + H(+). In terms of biological role, GTP hydrolase that promotes the GTP-dependent binding of aminoacyl-tRNA to the A-site of ribosomes during protein biosynthesis. The sequence is that of Elongation factor Tu from Shewanella baltica (strain OS185).